The sequence spans 89 residues: Bacterial microcompartment shell vertex protein GrpN (89 aa).

Positions 1 to 83 (MYLGKVIGTV…IDAAVVGIVD (83 aa)) constitute a BMV domain.

Belongs to the CcmL/EutN family. In terms of assembly, homopentamer with a small central pore.

It localises to the bacterial microcompartment. In terms of biological role, probably forms vertices in the bacterial microcompartment (BMC) predicted to be involved in glycyl radical-based 1,2-propanediol metabolism in this organism. The chain is Bacterial microcompartment shell vertex protein GrpN from Rhodospirillum rubrum (strain F11).